Consider the following 674-residue polypeptide: Ribosome biogenesis protein BOP1 homolog (674 aa).

The disordered stretch occupies residues 1-28 (MASTSAATPLKNKRKFENGKKKPKTLKD). Positions 15–28 (KFENGKKKPKTLKD) are enriched in basic and acidic residues. WD repeat units follow at residues 342–384 (GHTG…KTFQ), 386–425 (DGEV…RLHV), 427–458 (QTEA…LMLK), 459–500 (MPNE…SQCP), 503–541 (KRKG…LVKK), 587–626 (HHTA…DFVK), and 643–674 (PNDL…LFTY).

The protein belongs to the WD repeat BOP1/ERB1 family.

The protein resides in the nucleus. It is found in the nucleolus. It localises to the nucleoplasm. In terms of biological role, required for maturation of ribosomal RNAs and formation of the large ribosomal subunit. The sequence is that of Ribosome biogenesis protein BOP1 homolog from Caenorhabditis elegans.